A 414-amino-acid chain; its full sequence is Protein DNA-DAMAGE INDUCIBLE 1 (414 aa).

In terms of domain architecture, Ubiquitin-like spans 1-76; that stretch reads MRITVMTAGE…LMMMVSNASS (76 aa). Residues 213–292 enclose the Peptidase A2 domain; sequence LKAFVDSGAQ…NMEFLFGLDM (80 aa). The active site involves D218. The segment at 332-374 is disordered; it reads ERVPNDASSSGATVPSGFTEKKNNTVANPTSQQPKRQNTSEGP. A compositionally biased stretch (polar residues) spans 355–372; sequence NTVANPTSQQPKRQNTSE. The UBA domain maps to 374-414; that stretch reads PEFEAKIAKLVELGFSRDSVIQALKLFEGNEEQAAGFLFGG.

The protein belongs to the DDI1 family. Homodimer.

It is found in the cytoplasm. The protein localises to the cytosol. Functionally, receptor of ubiquitinated protein targeted to ubiquitin/proteasome-mediated proteolysis (UPP). Relatively weak affinity for both 'Lys-48'- and 'Lys-63'-linked ubiquitin chains with a slight preference for 'Lys-48-'linked chains of three or more ubiquitin units. This Arabidopsis thaliana (Mouse-ear cress) protein is Protein DNA-DAMAGE INDUCIBLE 1.